A 301-amino-acid chain; its full sequence is 4-hydroxy-tetrahydrodipicolinate synthase (301 aa).

Thr-46 provides a ligand contact to pyruvate. Tyr-135 serves as the catalytic Proton donor/acceptor. Lys-163 (schiff-base intermediate with substrate) is an active-site residue. Residue Ile-205 participates in pyruvate binding.

This sequence belongs to the DapA family. In terms of assembly, homotetramer; dimer of dimers.

The protein localises to the cytoplasm. The enzyme catalyses L-aspartate 4-semialdehyde + pyruvate = (2S,4S)-4-hydroxy-2,3,4,5-tetrahydrodipicolinate + H2O + H(+). It functions in the pathway amino-acid biosynthesis; L-lysine biosynthesis via DAP pathway; (S)-tetrahydrodipicolinate from L-aspartate: step 3/4. Its function is as follows. Catalyzes the condensation of (S)-aspartate-beta-semialdehyde [(S)-ASA] and pyruvate to 4-hydroxy-tetrahydrodipicolinate (HTPA). This chain is 4-hydroxy-tetrahydrodipicolinate synthase, found in Lacticaseibacillus casei (strain BL23) (Lactobacillus casei).